The following is a 186-amino-acid chain: Dihydrofolate reductase (186 aa).

The 179-residue stretch at 2–180 (RLNVVVAVSE…FTFKFCVYDV (179 aa)) folds into the DHFR domain. Residues Ala8 and 14 to 20 (GIGKGGG) contribute to the NADP(+) site. Position 28-33 (28-33 (DMEFFK)) interacts with substrate. Residue 51–53 (RVT) coordinates NADP(+). A substrate-binding site is contributed by Arg67. Residues 73 to 75 (SST) and 112 to 119 (GGYRLYKE) each bind NADP(+).

This sequence belongs to the dihydrofolate reductase family. As to quaternary structure, monomer.

The catalysed reaction is (6S)-5,6,7,8-tetrahydrofolate + NADP(+) = 7,8-dihydrofolate + NADPH + H(+). Its pathway is cofactor biosynthesis; tetrahydrofolate biosynthesis; 5,6,7,8-tetrahydrofolate from 7,8-dihydrofolate: step 1/1. Key enzyme in folate metabolism. Contributes to the de novo mitochondrial thymidylate biosynthesis pathway. Catalyzes an essential reaction for de novo glycine and purine synthesis, and for DNA precursor synthesis. The chain is Dihydrofolate reductase from Schistosoma mansoni (Blood fluke).